Consider the following 56-residue polypeptide: Large ribosomal subunit protein bL33 (56 aa).

Over residues 1–12 (MASKGGRDKIKL) the composition is skewed to basic and acidic residues. Positions 1-30 (MASKGGRDKIKLESTAGTGHFYTTTKNKRT) are disordered. Residues 15-25 (TAGTGHFYTTT) show a composition bias toward polar residues.

Belongs to the bacterial ribosomal protein bL33 family.

The protein is Large ribosomal subunit protein bL33 of Ralstonia nicotianae (strain ATCC BAA-1114 / GMI1000) (Ralstonia solanacearum).